Consider the following 280-residue polypeptide: Thiamine-phosphate synthase (280 aa).

The disordered stretch occupies residues Met1–Thr64. Over residues Gly42–Ala55 the composition is skewed to basic and acidic residues. Residues Gln104 to Lys108 and Asn141 contribute to the 4-amino-2-methyl-5-(diphosphooxymethyl)pyrimidine site. Positions 142 and 161 each coordinate Mg(2+). Ser179 provides a ligand contact to 4-amino-2-methyl-5-(diphosphooxymethyl)pyrimidine. Residue Thr205–Thr207 participates in 2-[(2R,5Z)-2-carboxy-4-methylthiazol-5(2H)-ylidene]ethyl phosphate binding. Position 208 (Lys208) interacts with 4-amino-2-methyl-5-(diphosphooxymethyl)pyrimidine. 2-[(2R,5Z)-2-carboxy-4-methylthiazol-5(2H)-ylidene]ethyl phosphate is bound at residue Gly236.

This sequence belongs to the thiamine-phosphate synthase family. Requires Mg(2+) as cofactor.

The enzyme catalyses 2-[(2R,5Z)-2-carboxy-4-methylthiazol-5(2H)-ylidene]ethyl phosphate + 4-amino-2-methyl-5-(diphosphooxymethyl)pyrimidine + 2 H(+) = thiamine phosphate + CO2 + diphosphate. It catalyses the reaction 2-(2-carboxy-4-methylthiazol-5-yl)ethyl phosphate + 4-amino-2-methyl-5-(diphosphooxymethyl)pyrimidine + 2 H(+) = thiamine phosphate + CO2 + diphosphate. It carries out the reaction 4-methyl-5-(2-phosphooxyethyl)-thiazole + 4-amino-2-methyl-5-(diphosphooxymethyl)pyrimidine + H(+) = thiamine phosphate + diphosphate. It participates in cofactor biosynthesis; thiamine diphosphate biosynthesis; thiamine phosphate from 4-amino-2-methyl-5-diphosphomethylpyrimidine and 4-methyl-5-(2-phosphoethyl)-thiazole: step 1/1. Functionally, condenses 4-methyl-5-(beta-hydroxyethyl)thiazole monophosphate (THZ-P) and 2-methyl-4-amino-5-hydroxymethyl pyrimidine pyrophosphate (HMP-PP) to form thiamine monophosphate (TMP). The polypeptide is Thiamine-phosphate synthase (Deinococcus radiodurans (strain ATCC 13939 / DSM 20539 / JCM 16871 / CCUG 27074 / LMG 4051 / NBRC 15346 / NCIMB 9279 / VKM B-1422 / R1)).